The primary structure comprises 548 residues: tRNA (guanine(26)-N(2))-dimethyltransferase (548 aa).

The 441-residue stretch at 30-470 folds into the Trm1 methyltransferase domain; it reads ASLTEGSAII…APWSFVWDVL (441 aa). S-adenosyl-L-methionine-binding residues include R57, R137, D155, and A186. 4 residues coordinate Zn(2+): C317, C320, C354, and C357. Positions 523–548 are disordered; the sequence is QMNPTENWGPKSKPGKRTIAEVDSKS.

Belongs to the class I-like SAM-binding methyltransferase superfamily. Trm1 family.

It localises to the mitochondrion. It is found in the nucleus. The protein resides in the cytoplasm. It catalyses the reaction guanosine(26) in tRNA + 2 S-adenosyl-L-methionine = N(2)-dimethylguanosine(26) in tRNA + 2 S-adenosyl-L-homocysteine + 2 H(+). In terms of biological role, dimethylates a single guanine residue at position 26 of nuclear- and mitochondrial-encoded tRNAs using S-adenosyl-L-methionine as donor of the methyl groups. Also has tRNA strand annealing and dissociation activity independently of its tRNA guanine-dimethyltransferase activity. The protein is tRNA (guanine(26)-N(2))-dimethyltransferase of Schizosaccharomyces pombe (strain 972 / ATCC 24843) (Fission yeast).